The chain runs to 338 residues: Glycerol-3-phosphate dehydrogenase [NAD(P)+] (338 aa).

Positions 11, 12, 32, 33, and 109 each coordinate NADPH. Positions 109, 140, and 142 each coordinate sn-glycerol 3-phosphate. Alanine 144 is an NADPH binding site. Residues lysine 195, aspartate 248, serine 258, arginine 259, and asparagine 260 each contribute to the sn-glycerol 3-phosphate site. Residue lysine 195 is the Proton acceptor of the active site. Arginine 259 provides a ligand contact to NADPH. NADPH contacts are provided by valine 283 and glutamate 285.

The protein belongs to the NAD-dependent glycerol-3-phosphate dehydrogenase family.

Its subcellular location is the cytoplasm. It carries out the reaction sn-glycerol 3-phosphate + NAD(+) = dihydroxyacetone phosphate + NADH + H(+). The catalysed reaction is sn-glycerol 3-phosphate + NADP(+) = dihydroxyacetone phosphate + NADPH + H(+). The protein operates within membrane lipid metabolism; glycerophospholipid metabolism. Functionally, catalyzes the reduction of the glycolytic intermediate dihydroxyacetone phosphate (DHAP) to sn-glycerol 3-phosphate (G3P), the key precursor for phospholipid synthesis. This chain is Glycerol-3-phosphate dehydrogenase [NAD(P)+], found in Leuconostoc citreum (strain KM20).